We begin with the raw amino-acid sequence, 337 residues long: uncharacterized protein (337 aa).

At 1–10 (MKLKINIRPN) the chain is on the cytoplasmic side. The helical transmembrane segment at 11–31 (EIIFLICIVVIFSFSYTLTYF) threads the bilayer. The Extracellular portion of the chain corresponds to 32-100 (DSPIFKEHYI…LEKLFSFSDN (69 aa)). Residues 101 to 121 (ILIVLIIVQVIVGFLIFLLSV) form a helical membrane-spanning segment. Residues 122-197 (EKLSKCNYQL…KILIIKKKRD (76 aa)) are Cytoplasmic-facing. A compositionally biased stretch (low complexity) spans 148-167 (NNNNEDINNNNNNNNNNNNK). The tract at residues 148 to 179 (NNNNEDINNNNNNNNNNNNKNKNDERNNEEIE) is disordered. Residues 198-218 (ILLAIIIFFLVLLGVLTIIYV) traverse the membrane as a helical segment. The Extracellular portion of the chain corresponds to 219-285 (SFIPLNIRKA…SWSLDSGLFN (67 aa)). The chain crosses the membrane as a helical span at residues 286–306 (VKIVFFSTILIEFLTGCLILL). The Cytoplasmic segment spans residues 307 to 337 (MKFKKDPNIVPLTKPSIASPTQIPHLFCIAK).

The protein localises to the membrane. This is an uncharacterized protein from Dictyostelium discoideum (Social amoeba).